The primary structure comprises 134 residues: Putative nickel-responsive regulator (134 aa).

Ni(2+) is bound by residues His78, His89, His91, and Cys97.

The protein belongs to the transcriptional regulatory CopG/NikR family. Requires Ni(2+) as cofactor.

Its function is as follows. Transcriptional regulator. The polypeptide is Putative nickel-responsive regulator (Chlorobaculum parvum (strain DSM 263 / NCIMB 8327) (Chlorobium vibrioforme subsp. thiosulfatophilum)).